The primary structure comprises 256 residues: Probable transcriptional regulatory protein cce_0894 (256 aa).

The protein belongs to the TACO1 family.

The protein resides in the cytoplasm. This is Probable transcriptional regulatory protein cce_0894 from Crocosphaera subtropica (strain ATCC 51142 / BH68) (Cyanothece sp. (strain ATCC 51142)).